Consider the following 300-residue polypeptide: Protein XRI1 (300 aa).

In terms of assembly, interacts (via C-terminal domain) with MIP1.

It is found in the nucleus. Functionally, required for mitotic division of the generative cell nucleus and the development of mature tricellular pollen grains, and for male and female meiosis. This Arabidopsis thaliana (Mouse-ear cress) protein is Protein XRI1 (XRI1).